The primary structure comprises 122 residues: Small ribosomal subunit protein uS13 (122 aa).

The interval 95-122 (GLPVRGQRTHTNARTRKGPAKSIAGKKK) is disordered.

Belongs to the universal ribosomal protein uS13 family. In terms of assembly, part of the 30S ribosomal subunit. Forms a loose heterodimer with protein S19. Forms two bridges to the 50S subunit in the 70S ribosome.

In terms of biological role, located at the top of the head of the 30S subunit, it contacts several helices of the 16S rRNA. In the 70S ribosome it contacts the 23S rRNA (bridge B1a) and protein L5 of the 50S subunit (bridge B1b), connecting the 2 subunits; these bridges are implicated in subunit movement. Contacts the tRNAs in the A and P-sites. This Nitrobacter hamburgensis (strain DSM 10229 / NCIMB 13809 / X14) protein is Small ribosomal subunit protein uS13.